A 519-amino-acid chain; its full sequence is Putative lipase ATG15 (519 aa).

Over 1–5 the chain is Cytoplasmic; sequence MYIPG. A helical; Signal-anchor for type II membrane protein transmembrane segment spans residues 6–26; the sequence is PLRLSSYLLPFLSSPSPPAQS. Topologically, residues 27-519 are lumenal; sequence SPDTRTISFK…CYKWEFGEWN (493 aa). 6 N-linked (GlcNAc...) asparagine glycosylation sites follow: Asn-48, Asn-133, Asn-196, Asn-220, Asn-302, and Asn-309. The active-site Charge relay system is the Ser-318. An N-linked (GlcNAc...) asparagine glycan is attached at Asn-361. Positions 481–502 are disordered; it reads RRGPKRQPGGEDPKHGGVPKPV.

Belongs to the AB hydrolase superfamily. Lipase family. As to quaternary structure, binds to both phosphatidylinositol (PI) and phosphatidylinositol 3,5-bisphosphate (PIP2).

The protein localises to the endosome. It is found in the multivesicular body membrane. It localises to the prevacuolar compartment membrane. The catalysed reaction is a triacylglycerol + H2O = a diacylglycerol + a fatty acid + H(+). Lipase which is essential for lysis of subvacuolar cytoplasm to vacuole targeted bodies and intravacuolar autophagic bodies. Involved in the lysis of intravacuolar multivesicular body (MVB) vesicles. The intravacuolar membrane disintegration by ATG15 is critical to life span extension. This Cryptococcus neoformans var. neoformans serotype D (strain B-3501A) (Filobasidiella neoformans) protein is Putative lipase ATG15 (ATG15).